The chain runs to 94 residues: Co-chaperonin GroES (94 aa).

This sequence belongs to the GroES chaperonin family. As to quaternary structure, heptamer of 7 subunits arranged in a ring. Interacts with the chaperonin GroEL.

The protein localises to the cytoplasm. In terms of biological role, together with the chaperonin GroEL, plays an essential role in assisting protein folding. The GroEL-GroES system forms a nano-cage that allows encapsulation of the non-native substrate proteins and provides a physical environment optimized to promote and accelerate protein folding. GroES binds to the apical surface of the GroEL ring, thereby capping the opening of the GroEL channel. This Staphylococcus epidermidis (strain ATCC 35984 / DSM 28319 / BCRC 17069 / CCUG 31568 / BM 3577 / RP62A) protein is Co-chaperonin GroES.